Here is a 292-residue protein sequence, read N- to C-terminus: Probable endonuclease 4 (292 aa).

Residues histidine 71, histidine 111, glutamate 148, aspartate 182, histidine 185, histidine 217, aspartate 230, histidine 232, and glutamate 262 each contribute to the Zn(2+) site.

This sequence belongs to the AP endonuclease 2 family. The cofactor is Zn(2+).

The enzyme catalyses Endonucleolytic cleavage to 5'-phosphooligonucleotide end-products.. Functionally, endonuclease IV plays a role in DNA repair. It cleaves phosphodiester bonds at apurinic or apyrimidinic (AP) sites, generating a 3'-hydroxyl group and a 5'-terminal sugar phosphate. The polypeptide is Probable endonuclease 4 (Aster yellows witches'-broom phytoplasma (strain AYWB)).